The primary structure comprises 337 residues: 5-formaminoimidazole-4-carboxamide-1-(beta)-D-ribofuranosyl 5'-monophosphate synthetase (337 aa).

Positions 9 and 73 each coordinate 5-amino-1-(5-phospho-beta-D-ribosyl)imidazole-4-carboxamide. Residues 94-324 (KKIFEWEADQ…IGRRIAREIR (231 aa)) enclose the ATP-grasp domain. ATP-binding positions include 124–184 (PEDV…VPMY) and glutamate 206. Asparagine 234 contacts 5-amino-1-(5-phospho-beta-D-ribosyl)imidazole-4-carboxamide. Mg(2+)-binding residues include glutamate 273 and glutamate 286.

This sequence belongs to the phosphohexose mutase family. Mg(2+) is required as a cofactor. Mn(2+) serves as cofactor.

The catalysed reaction is 5-amino-1-(5-phospho-beta-D-ribosyl)imidazole-4-carboxamide + formate + ATP = 5-formamido-1-(5-phospho-D-ribosyl)imidazole-4-carboxamide + ADP + phosphate. The protein operates within purine metabolism; IMP biosynthesis via de novo pathway; 5-formamido-1-(5-phospho-D-ribosyl)imidazole-4-carboxamide from 5-amino-1-(5-phospho-D-ribosyl)imidazole-4-carboxamide (formate route): step 1/1. Catalyzes the ATP- and formate-dependent formylation of 5-aminoimidazole-4-carboxamide-1-beta-d-ribofuranosyl 5'-monophosphate (AICAR) to 5-formaminoimidazole-4-carboxamide-1-beta-d-ribofuranosyl 5'-monophosphate (FAICAR) in the absence of folates. The protein is 5-formaminoimidazole-4-carboxamide-1-(beta)-D-ribofuranosyl 5'-monophosphate synthetase of Saccharolobus solfataricus (strain ATCC 35092 / DSM 1617 / JCM 11322 / P2) (Sulfolobus solfataricus).